Reading from the N-terminus, the 91-residue chain is uncharacterized protein (91 aa).

Residues 1–91 form the Integrase catalytic domain; the sequence is MLTFWHWKWL…YQNILRENGI (91 aa).

This is an uncharacterized protein from Haemophilus influenzae (strain ATCC 51907 / DSM 11121 / KW20 / Rd).